We begin with the raw amino-acid sequence, 359 residues long: Peptide chain release factor 1 (359 aa).

Position 235 is an N5-methylglutamine (Gln-235). Residues Lys-284–Phe-311 form a disordered region.

The protein belongs to the prokaryotic/mitochondrial release factor family. In terms of processing, methylated by PrmC. Methylation increases the termination efficiency of RF1.

It localises to the cytoplasm. Its function is as follows. Peptide chain release factor 1 directs the termination of translation in response to the peptide chain termination codons UAG and UAA. The chain is Peptide chain release factor 1 from Bartonella quintana (strain Toulouse) (Rochalimaea quintana).